We begin with the raw amino-acid sequence, 448 residues long: MSTTNAINGNLYEQLHQGRTNMYKSKVDVVLGAQWGDEGKGKVVDMLASEVDIVCRCQGGNNAGHTVVANGTEFDFHLLPSGVVNEKCISVIGNGVVIHLPSLFDEVLKNEAKGLQHLEHRLIISDRAHLVFDFHQHVDGMQEAEKGGKSLGTTKKGIGPAYSSKATRNGIRVGELLGDFNAFSDKFKLIVATHLRLFPSINVDVEAELTRYRDYAEKVRPYVKDTICFLHTALRNGKTILVEGANAAMLDIDFGTYPYVTSSNCSIGGVLTGLGLPPQTIGEVIGVVKAYTTRVGDGPFPSEQLNEIGDLLQTRGFEVGVTTKRKRRCGWLDIPLLRYTSLVNGYTCICLTKLDILDTLPEIKVAVSYKKANGDKLDHFPGTIAELGNIEVEYAVLPGWQTSTEHIRNFKELPENAQNYVRFLEKELSVPVRWVGVGKGRESIINVH.

GTP-binding positions include 36–42 (GDEGKGK) and 64–66 (GHT). Asp37 (proton acceptor) is an active-site residue. Mg(2+) contacts are provided by Asp37 and Gly64. Residues 37 to 40 (DEGK), 62 to 65 (NAGH), Thr154, Arg168, Asn246, Thr261, and Arg325 contribute to the IMP site. His65 (proton donor) is an active-site residue. Residue 321–327 (VTTKRKR) coordinates substrate. GTP-binding positions include Arg327, 353–355 (KLD), and 436–438 (GVG).

Belongs to the adenylosuccinate synthetase family. Homodimer. It depends on Mg(2+) as a cofactor.

The protein localises to the cytoplasm. It carries out the reaction IMP + L-aspartate + GTP = N(6)-(1,2-dicarboxyethyl)-AMP + GDP + phosphate + 2 H(+). It participates in purine metabolism; AMP biosynthesis via de novo pathway; AMP from IMP: step 1/2. Plays an important role in the de novo pathway and in the salvage pathway of purine nucleotide biosynthesis. Catalyzes the first committed step in the biosynthesis of AMP from IMP. The sequence is that of Adenylosuccinate synthetase from Drosophila pseudoobscura pseudoobscura (Fruit fly).